Here is a 382-residue protein sequence, read N- to C-terminus: Sphingosine 1-phosphate receptor 1 (382 aa).

N-acetylvaline is present on Val2. Over 2–46 (VSTSIPEVKALRSSVSDYGNYDIIVRHYNYTGKLNIGAEKDHGIK) the chain is Extracellular. Lys10 is modified (N6-acetyllysine). A glycan (N-linked (GlcNAc...) asparagine) is linked at Asn30. The chain crosses the membrane as a helical span at residues 47 to 68 (LTSVVFILICCFIILENIFVLL). The Cytoplasmic portion of the chain corresponds to 69 to 82 (TIWKTKKFHRPMYY). Residues 83–104 (FIGNLALSDLLAGVAYTANLLL) form a helical membrane-spanning segment. The Extracellular segment spans residues 105–116 (SGATTYKLTPAQ). The chain crosses the membrane as a helical span at residues 117–138 (WFLREGSMFVALSASVFSLLAI). 120–121 (RE) contacts sphing-4-enine 1-phosphate. Residues 139-160 (AIERYITMLKMKLHNGSNSSRS) lie on the Cytoplasmic side of the membrane. Residues 161-182 (FLLISACWVISLILGGLPIMGW) form a helical membrane-spanning segment. Topologically, residues 183 to 196 (NCISSLSSCSTVLP) are extracellular. A disulfide bridge links Cys184 with Cys191. A helical membrane pass occupies residues 197 to 224 (LYHKHYILFCTTVFTLLLLSIVILYCRI). The Cytoplasmic segment spans residues 225-257 (YSLVRTRSRRLTFRKNISKASRSSEKSLALLKT). Thr236 carries the phosphothreonine modification. The chain crosses the membrane as a helical span at residues 258 to 278 (VIIVLSVFIACWAPLFILLLL). 265–269 (FIACW) lines the sphing-4-enine 1-phosphate pocket. Topologically, residues 279 to 289 (DVGCKAKTCDI) are extracellular. Cys282 and Cys287 are disulfide-bonded. Residues 290–310 (LYKAEYFLVLAVLNSGTNPII) form a helical membrane-spanning segment. At 311-382 (YTLTNKEMRR…MSSGNVNSSS (72 aa)) the chain is on the cytoplasmic side. The S-palmitoyl cysteine moiety is linked to residue Cys328. The interval 348–382 (MEFSRSKSDNSSHPQKDDGDNPETIMSSGNVNSSS) is disordered. Phosphoserine is present on residues Ser351 and Ser353. A compositionally biased stretch (basic and acidic residues) spans 351-366 (SRSKSDNSSHPQKDDG). The segment covering 371–382 (TIMSSGNVNSSS) has biased composition (polar residues).

Belongs to the G-protein coupled receptor 1 family. Interacts with GNAI1 and GNAI3. Interacts with CD69; this interaction promotes S1PR1 degradation. Post-translationally, palmitoylated by ZDHHC5. Palmitoylation is required for targeting to plasma membrane, enabling G(i) coupling. As to expression, expressed in a wide variety of tissues with highest levels in brain, heart and spleen. Lower levels found in kidney, liver, lung, muscle, placenta, thymus, and uterus. Very low levels in intestine, stomach and testis. According to PubMed:9931453, expressed modestly in apparent endothelial cells surrounding some blood vessels (e.g. aortic trunk).

It localises to the cell membrane. The protein resides in the endosome. Its subcellular location is the membrane raft. In terms of biological role, G-protein coupled receptor for the bioactive lysosphingolipid sphingosine 1-phosphate (S1P) that seems to be coupled to the G(i) subclass of heteromeric G proteins. Signaling leads to the activation of RAC1, SRC, PTK2/FAK1 and MAP kinases. Plays an important role in cell migration, probably via its role in the reorganization of the actin cytoskeleton and the formation of lamellipodia in response to stimuli that increase the activity of the sphingosine kinase SPHK1. Required for normal chemotaxis toward sphingosine 1-phosphate. Required for normal embryonic heart development and normal cardiac morphogenesis. Plays an important role in the regulation of sprouting angiogenesis and vascular maturation. Inhibits sprouting angiogenesis to prevent excessive sprouting during blood vessel development. Required for normal egress of mature T-cells from the thymus into the blood stream and into peripheral lymphoid organs. Plays a role in the migration of osteoclast precursor cells, the regulation of bone mineralization and bone homeostasis. Plays a role in responses to oxidized 1-palmitoyl-2-arachidonoyl-sn-glycero-3-phosphocholine by pulmonary endothelial cells and in the protection against ventilator-induced lung injury. The polypeptide is Sphingosine 1-phosphate receptor 1 (Mus musculus (Mouse)).